Reading from the N-terminus, the 312-residue chain is Putative S-adenosyl-L-methionine-dependent methyltransferase BCG_1768c (312 aa).

S-adenosyl-L-methionine-binding positions include aspartate 130 and 159–160; that span reads DL.

It belongs to the UPF0677 family.

In terms of biological role, exhibits S-adenosyl-L-methionine-dependent methyltransferase activity. This is Putative S-adenosyl-L-methionine-dependent methyltransferase BCG_1768c from Mycobacterium bovis (strain BCG / Pasteur 1173P2).